The sequence spans 89 residues: Large ribosomal subunit protein bL27 (89 aa).

The disordered stretch occupies residues 1–21 (MAHKKAGGSSRNGRDSAGRRL).

The protein belongs to the bacterial ribosomal protein bL27 family.

This is Large ribosomal subunit protein bL27 from Roseobacter denitrificans (strain ATCC 33942 / OCh 114) (Erythrobacter sp. (strain OCh 114)).